The primary structure comprises 959 residues: MTQNLSQLEHNDAFIQRHIGSSAEQQQQMLAAVGANSLSTLIQQIVPADIQLPSPPPVGEAATEHQALAELKGIASQNQRYKSYIGMGYSPVLTPPVILRNMLENPGWYTAYTPYQPEVSQGRLEALLNFQQLTQDLTGLDLASASLLDEATAAAESMALAKRASKLKDANRFFVADDVHPQTLDVVLTRAETFGFEVIVDRAEKVLELDGVFGVLLQQVGTTGELHDYSALLAELKKRKIITSVAADIMALVLLTAPGKQGADVVFGSAQRFGVPMGYGGPHAAFFACRDEFKRSMPGRIIGVSRDAAGNTALRMAMQTREQHIRREKANSNICTSQVLLANIASLYAVYHGPQGLQRIAGRIHRMTDILAAGLQQAGLALRFTHWFDTLTVEVKDKAAVLARALSFGINLRTDIHGAVGITLDETTSREDLQILFTLLVGDNHGLDIDLLDAKVSQNSQSIQTGMLRQEPILTHPVFNRYHSETEMMRYMHRLERKDLALNQAMIPLGSCTMKLNAAAEMIPITWPEFAELHPFCPPEQAAGYQQMIGQLSQWLVQLTGYDAVCMQPNSGAQGEYAGLLAIRRYHESRNQASRHICLIPSSAHGTNPASAQMAGMSVVVVACDKQGNIDLHDLRQKAGEAGDELSCIMVTYPSTHGVYEETIREVCQIVHQFGGQVYLDGANMNAQVGITTPGYIGADVSHLNLHKTFCIPHGGGGPGMGPIGVKAHLAPFVPGHSVVQIDGMTTQQGAVSAAPFGSASILPISWMYIRMMGADGLKQASQVAILNANYIATRLKEAYPVLYTGHDGSVAHECILDIRPLKEATGISEMDIAKRLIDFGFHAPTMSFPVAGTLMVEPTESESKVELDRFIDAMLAIRAEIEKVARGEWPLEDNPLVNAPHTQAELVGEWQHPYSRELAVFPVAGVMENKYWPSVKRLDDVYGDRNLFCSCVPISDYE.

K708 carries the N6-(pyridoxal phosphate)lysine modification.

It belongs to the GcvP family. As to quaternary structure, the glycine cleavage system is composed of four proteins: P, T, L and H. The cofactor is pyridoxal 5'-phosphate.

The catalysed reaction is N(6)-[(R)-lipoyl]-L-lysyl-[glycine-cleavage complex H protein] + glycine + H(+) = N(6)-[(R)-S(8)-aminomethyldihydrolipoyl]-L-lysyl-[glycine-cleavage complex H protein] + CO2. Functionally, the glycine cleavage system catalyzes the degradation of glycine. The P protein binds the alpha-amino group of glycine through its pyridoxal phosphate cofactor; CO(2) is released and the remaining methylamine moiety is then transferred to the lipoamide cofactor of the H protein. This Yersinia enterocolitica serotype O:8 / biotype 1B (strain NCTC 13174 / 8081) protein is Glycine dehydrogenase (decarboxylating).